A 379-amino-acid chain; its full sequence is Lipoyl synthase 2, mitochondrial (379 aa).

Cysteine 106, cysteine 111, cysteine 117, cysteine 137, cysteine 141, cysteine 144, and serine 352 together coordinate [4Fe-4S] cluster. Residues 122 to 341 enclose the Radical SAM core domain; it reads EHGTQTATIM…EERGNELGFL (220 aa).

The protein belongs to the radical SAM superfamily. Lipoyl synthase family. The cofactor is [4Fe-4S] cluster.

Its subcellular location is the mitochondrion. It catalyses the reaction [[Fe-S] cluster scaffold protein carrying a second [4Fe-4S](2+) cluster] + N(6)-octanoyl-L-lysyl-[protein] + 2 oxidized [2Fe-2S]-[ferredoxin] + 2 S-adenosyl-L-methionine + 4 H(+) = [[Fe-S] cluster scaffold protein] + N(6)-[(R)-dihydrolipoyl]-L-lysyl-[protein] + 4 Fe(3+) + 2 hydrogen sulfide + 2 5'-deoxyadenosine + 2 L-methionine + 2 reduced [2Fe-2S]-[ferredoxin]. The protein operates within protein modification; protein lipoylation via endogenous pathway; protein N(6)-(lipoyl)lysine from octanoyl-[acyl-carrier-protein]: step 2/2. Catalyzes the radical-mediated insertion of two sulfur atoms into the C-6 and C-8 positions of the octanoyl moiety bound to the lipoyl domains of lipoate-dependent enzymes, thereby converting the octanoylated domains into lipoylated derivatives. In Drosophila yakuba (Fruit fly), this protein is Lipoyl synthase 2, mitochondrial.